A 512-amino-acid polypeptide reads, in one-letter code: Sodium/proline symporter (512 aa).

13 consecutive transmembrane segments (helical) span residues 16–36 (WQTY…GFYG), 54–74 (IGPY…WMIM), 85–105 (LSAM…YFVV), 139–159 (IISG…GFVS), 174–194 (FGLI…GYLA), 200–220 (FFQG…AMMN), 240–260 (LFKG…LGYF), 286–306 (ISWM…GIAF), 327–347 (VLFH…AIMS), 381–401 (FVMI…AIAW), 410–430 (LVGN…LFAL), 438–458 (AGAV…IAWI), and 467–487 (IFGL…TYVV).

Belongs to the sodium:solute symporter (SSF) (TC 2.A.21) family.

Its subcellular location is the cell membrane. The enzyme catalyses L-proline(in) + Na(+)(in) = L-proline(out) + Na(+)(out). Functionally, catalyzes the sodium-dependent uptake of extracellular L-proline. Since most S.aureus strains are L-proline auxotrophs, this transporter may aid the bacterial persistence during an infection of tissues with low proline concentrations. The chain is Sodium/proline symporter (putP) from Staphylococcus aureus (strain Newman).